We begin with the raw amino-acid sequence, 204 residues long: Peptide deformylase (204 aa).

The Fe cation site is built by Cys-131 and His-174. The active site involves Glu-175. Position 178 (His-178) interacts with Fe cation.

This sequence belongs to the polypeptide deformylase family. Fe(2+) serves as cofactor.

The catalysed reaction is N-terminal N-formyl-L-methionyl-[peptide] + H2O = N-terminal L-methionyl-[peptide] + formate. Functionally, removes the formyl group from the N-terminal Met of newly synthesized proteins. Requires at least a dipeptide for an efficient rate of reaction. N-terminal L-methionine is a prerequisite for activity but the enzyme has broad specificity at other positions. In Streptococcus pyogenes serotype M18 (strain MGAS8232), this protein is Peptide deformylase.